The following is a 635-amino-acid chain: Chaperone protein HtpG (635 aa).

The tract at residues 1 to 336 is a; substrate-binding; the sequence is MTTAEAAAPE…SADLPLNLSR (336 aa). The interval 337–556 is b; it reads EMLQDSAILA…ESGIDRRLEK (220 aa). The segment at 557 to 635 is c; the sequence is LLASAGRLGD…RVMQRGLPTA (79 aa).

Belongs to the heat shock protein 90 family. Homodimer.

It localises to the cytoplasm. Its function is as follows. Molecular chaperone. Has ATPase activity. In Azorhizobium caulinodans (strain ATCC 43989 / DSM 5975 / JCM 20966 / LMG 6465 / NBRC 14845 / NCIMB 13405 / ORS 571), this protein is Chaperone protein HtpG.